Consider the following 424-residue polypeptide: Glutamate-1-semialdehyde 2,1-aminomutase (424 aa).

N6-(pyridoxal phosphate)lysine is present on Lys-266.

Belongs to the class-III pyridoxal-phosphate-dependent aminotransferase family. HemL subfamily. As to quaternary structure, homodimer. It depends on pyridoxal 5'-phosphate as a cofactor.

It is found in the cytoplasm. The enzyme catalyses (S)-4-amino-5-oxopentanoate = 5-aminolevulinate. The protein operates within porphyrin-containing compound metabolism; protoporphyrin-IX biosynthesis; 5-aminolevulinate from L-glutamyl-tRNA(Glu): step 2/2. The protein is Glutamate-1-semialdehyde 2,1-aminomutase of Azoarcus sp. (strain BH72).